Here is a 519-residue protein sequence, read N- to C-terminus: Cytochrome P450 72C1 (519 aa).

A helical membrane pass occupies residues 10–30 (VFLIGFLILILNWVWRAVNWV). Cys-467 contributes to the heme binding site.

This sequence belongs to the cytochrome P450 family. Requires heme as cofactor. In terms of tissue distribution, expressed in hypocotyls, roots, cotyledons, stamens and silique junctions.

It is found in the membrane. In terms of biological role, atypical cytochrome P450 involved in brassinosteroids (BRs) inactivation and regulation of BRs homeostasis. Does not possess carbon 26 hydroxylase activity and may inactivate BRs by hydroxylation of carbons other than C-26. Acts in association with CYP734A1 to inactivate BRs and modulate photomorphogenesis. The chain is Cytochrome P450 72C1 (CYP72C1) from Arabidopsis thaliana (Mouse-ear cress).